A 127-amino-acid chain; its full sequence is Small ribosomal subunit protein bS6 (127 aa).

The segment covering 106 to 117 (ERKAQSEKKEAE) has biased composition (basic and acidic residues). The disordered stretch occupies residues 106–127 (ERKAQSEKKEAEVSEGEGGTEA). A compositionally biased stretch (acidic residues) spans 118-127 (VSEGEGGTEA).

It belongs to the bacterial ribosomal protein bS6 family.

Its function is as follows. Binds together with bS18 to 16S ribosomal RNA. This chain is Small ribosomal subunit protein bS6, found in Thermotoga neapolitana (strain ATCC 49049 / DSM 4359 / NBRC 107923 / NS-E).